The chain runs to 209 residues: Uracil phosphoribosyltransferase (209 aa).

5-phospho-alpha-D-ribose 1-diphosphate-binding positions include Arg-79, Arg-104, and 131-139 (DPMLATGNS). Uracil is bound by residues Ile-194 and 199 to 201 (GDA). Asp-200 lines the 5-phospho-alpha-D-ribose 1-diphosphate pocket.

The protein belongs to the UPRTase family. It depends on Mg(2+) as a cofactor.

It catalyses the reaction UMP + diphosphate = 5-phospho-alpha-D-ribose 1-diphosphate + uracil. The protein operates within pyrimidine metabolism; UMP biosynthesis via salvage pathway; UMP from uracil: step 1/1. Allosterically activated by GTP. Catalyzes the conversion of uracil and 5-phospho-alpha-D-ribose 1-diphosphate (PRPP) to UMP and diphosphate. In Rhizobium etli (strain CIAT 652), this protein is Uracil phosphoribosyltransferase.